Reading from the N-terminus, the 597-residue chain is uncharacterized protein (597 aa).

2 disordered regions span residues 165–197 (NSRA…IFSK) and 278–344 (ERSS…RGTL). A compositionally biased stretch (pro residues) spans 169 to 178 (VPPPAPPNPP). The segment covering 179 to 189 (KMEKHMSHDTS) has biased composition (basic and acidic residues). Residues 293–313 (STEVSITSSSPSPSSSSSTST) are compositionally biased toward low complexity. Residues 402–465 (WSLDDVLLWL…LDDLSKIIEN (64 aa)) enclose the SAM domain. A disordered region spans residues 576-597 (EESQQKESSSSGISSSPQTPTE). The segment covering 581–597 (KESSSSGISSSPQTPTE) has biased composition (low complexity).

This is an uncharacterized protein from Caenorhabditis elegans.